A 115-amino-acid polypeptide reads, in one-letter code: DNA-binding protein NP_4416A (115 aa).

Acidic residues predominate over residues 1–11 (MSGEPTDEDLE). Residues 1-46 (MSGEPTDEDLEELRKKKMEQLKEQGGEGQSEAAEAQRQQAEAQKKA) are disordered. Residues 12-25 (ELRKKKMEQLKEQG) are compositionally biased toward basic and acidic residues. Residues 29–41 (QSEAAEAQRQQAE) show a composition bias toward low complexity.

Belongs to the PDCD5 family.

This chain is DNA-binding protein NP_4416A, found in Natronomonas pharaonis (strain ATCC 35678 / DSM 2160 / CIP 103997 / JCM 8858 / NBRC 14720 / NCIMB 2260 / Gabara) (Halobacterium pharaonis).